Consider the following 235-residue polypeptide: uncharacterized protein (235 aa).

The segment at 37–235 is disordered; that stretch reads QNAKLNDGDN…GGEDYPWPWN (199 aa). The span at 72–89 shows a compositional bias: acidic residues; sequence GSDDYSDVEDGGAEEGDS. Positions 112–124 are enriched in low complexity; that stretch reads TSSTSTASTSSGS. The segment covering 152–170 has biased composition (basic and acidic residues); the sequence is RRPELDLSPKIENRSDSSS. Polar residues predominate over residues 185–202; that stretch reads NKDNPSRGQGNENPSASD.

This sequence belongs to the herpesviridae BKRF4 family.

This is an uncharacterized protein from Alcelaphine herpesvirus 1 (strain C500) (AlHV-1).